The chain runs to 74 residues: Sec-independent protein translocase protein TatA (74 aa).

The chain crosses the membrane as a helical span at residues 1-21 (MGGISIWQLLIIVAIIVLLFG). The segment at 51 to 74 (ANFDKVEAKESTSTTEKTKEKEQA) is disordered.

It belongs to the TatA/E family. The Tat system comprises two distinct complexes: a TatABC complex, containing multiple copies of TatA, TatB and TatC subunits, and a separate TatA complex, containing only TatA subunits. Substrates initially bind to the TatABC complex, which probably triggers association of the separate TatA complex to form the active translocon.

Its subcellular location is the cell inner membrane. Its function is as follows. Part of the twin-arginine translocation (Tat) system that transports large folded proteins containing a characteristic twin-arginine motif in their signal peptide across membranes. TatA could form the protein-conducting channel of the Tat system. The protein is Sec-independent protein translocase protein TatA of Haemophilus ducreyi (strain 35000HP / ATCC 700724).